A 763-amino-acid polypeptide reads, in one-letter code: Phosphoglycerol transferase I (763 aa).

4 helical membrane passes run 1–21, 26–46, 77–97, and 108–128; these read MSEL…AWKA, WWFA…ITLF, ILPG…LGWI, and FGYS…SPAF.

Belongs to the OpgB family.

It is found in the cell inner membrane. It carries out the reaction a phosphatidylglycerol + a membrane-derived-oligosaccharide D-glucose = a 1,2-diacyl-sn-glycerol + a membrane-derived-oligosaccharide 6-(glycerophospho)-D-glucose.. Its pathway is glycan metabolism; osmoregulated periplasmic glucan (OPG) biosynthesis. In terms of biological role, transfers a phosphoglycerol residue from phosphatidylglycerol to the membrane-bound nascent glucan backbones. The polypeptide is Phosphoglycerol transferase I (Escherichia coli O7:K1 (strain IAI39 / ExPEC)).